The chain runs to 545 residues: CTP synthase (545 aa).

An amidoligase domain region spans residues M1–L266. S14 is a CTP binding site. S14 is a UTP binding site. Residues S15–I20 and D72 contribute to the ATP site. Mg(2+)-binding residues include D72 and E140. Residues D147 to E149, K187 to Q192, and K223 each bind CTP. UTP is bound by residues K187–Q192 and K223. K239–V241 provides a ligand contact to ATP. One can recognise a Glutamine amidotransferase type-1 domain in the interval T291–R542. G352 provides a ligand contact to L-glutamine. The active-site Nucleophile; for glutamine hydrolysis is C379. L-glutamine-binding positions include L380–Q383, E403, and R470. Active-site residues include H515 and E517.

This sequence belongs to the CTP synthase family. Homotetramer.

It carries out the reaction UTP + L-glutamine + ATP + H2O = CTP + L-glutamate + ADP + phosphate + 2 H(+). It catalyses the reaction L-glutamine + H2O = L-glutamate + NH4(+). The catalysed reaction is UTP + NH4(+) + ATP = CTP + ADP + phosphate + 2 H(+). The protein operates within pyrimidine metabolism; CTP biosynthesis via de novo pathway; CTP from UDP: step 2/2. Its activity is regulated as follows. Allosterically activated by GTP, when glutamine is the substrate; GTP has no effect on the reaction when ammonia is the substrate. The allosteric effector GTP functions by stabilizing the protein conformation that binds the tetrahedral intermediate(s) formed during glutamine hydrolysis. Inhibited by the product CTP, via allosteric rather than competitive inhibition. Functionally, catalyzes the ATP-dependent amination of UTP to CTP with either L-glutamine or ammonia as the source of nitrogen. Regulates intracellular CTP levels through interactions with the four ribonucleotide triphosphates. In Yersinia enterocolitica serotype O:8 / biotype 1B (strain NCTC 13174 / 8081), this protein is CTP synthase.